Consider the following 134-residue polypeptide: Aspartate 1-decarboxylase (134 aa).

Residue S25 is the Schiff-base intermediate with substrate; via pyruvic acid of the active site. At S25 the chain carries Pyruvic acid (Ser). A substrate-binding site is contributed by T57. Catalysis depends on Y58, which acts as the Proton donor. Residue 73–75 participates in substrate binding; that stretch reads GAA.

Belongs to the PanD family. Heterooctamer of four alpha and four beta subunits. Pyruvate serves as cofactor. In terms of processing, is synthesized initially as an inactive proenzyme, which is activated by self-cleavage at a specific serine bond to produce a beta-subunit with a hydroxyl group at its C-terminus and an alpha-subunit with a pyruvoyl group at its N-terminus.

The protein resides in the cytoplasm. It catalyses the reaction L-aspartate + H(+) = beta-alanine + CO2. It functions in the pathway cofactor biosynthesis; (R)-pantothenate biosynthesis; beta-alanine from L-aspartate: step 1/1. Catalyzes the pyruvoyl-dependent decarboxylation of aspartate to produce beta-alanine. The sequence is that of Aspartate 1-decarboxylase from Sulfurihydrogenibium sp. (strain YO3AOP1).